The primary structure comprises 296 residues: ATP synthase gamma chain (296 aa).

Belongs to the ATPase gamma chain family. As to quaternary structure, F-type ATPases have 2 components, CF(1) - the catalytic core - and CF(0) - the membrane proton channel. CF(1) has five subunits: alpha(3), beta(3), gamma(1), delta(1), epsilon(1). CF(0) has three main subunits: a, b and c.

It localises to the cell inner membrane. Its function is as follows. Produces ATP from ADP in the presence of a proton gradient across the membrane. The gamma chain is believed to be important in regulating ATPase activity and the flow of protons through the CF(0) complex. The polypeptide is ATP synthase gamma chain (Rhodopirellula baltica (strain DSM 10527 / NCIMB 13988 / SH1)).